The chain runs to 439 residues: Xaa-Pro dipeptidase (439 aa).

Positions 244, 255, 335, 380, and 419 each coordinate Mn(2+).

This sequence belongs to the peptidase M24B family. Bacterial-type prolidase subfamily. Mn(2+) is required as a cofactor.

It carries out the reaction Xaa-L-Pro dipeptide + H2O = an L-alpha-amino acid + L-proline. Its function is as follows. Splits dipeptides with a prolyl residue in the C-terminal position. The chain is Xaa-Pro dipeptidase from Shewanella woodyi (strain ATCC 51908 / MS32).